A 374-amino-acid chain; its full sequence is All-trans-retinol dehydrogenase [NAD(+)] ADH7 (374 aa).

The Zn(2+) site is built by cysteine 47, histidine 68, cysteine 98, cysteine 101, cysteine 104, cysteine 112, and cysteine 174. NAD(+)-binding positions include 199 to 204 (GLGGVG), aspartate 223, lysine 228, 292 to 294 (VGA), and arginine 369.

The protein belongs to the zinc-containing alcohol dehydrogenase family. Class-IV subfamily. In terms of assembly, homodimer. Requires Zn(2+) as cofactor. High expression in the stomach mucosa. Lower expression in eye, thymus, skin and ovary. Very low expression in small intestine, liver and uterus.

The protein localises to the cytoplasm. The enzyme catalyses a primary alcohol + NAD(+) = an aldehyde + NADH + H(+). It carries out the reaction 10-hydroxydecanoate + NAD(+) = 10-oxodecanoate + NADH + H(+). The catalysed reaction is all-trans-retinol + NAD(+) = all-trans-retinal + NADH + H(+). It catalyses the reaction 9-cis-retinol + NAD(+) = 9-cis-retinal + NADH + H(+). The enzyme catalyses all-trans-3,4-didehydroretinol + NAD(+) = all-trans-3,4-didehydroretinal + NADH + H(+). It carries out the reaction all-trans-4-hydroxyretinol + NAD(+) = all-trans-4-hydroxyretinal + NADH + H(+). The catalysed reaction is all-trans-4-oxoretinol + NAD(+) = all-trans-4-oxoretinal + NADH + H(+). It catalyses the reaction 12-hydroxydodecanoate + NAD(+) = 12-oxododecanoate + NADH + H(+). The enzyme catalyses 16-hydroxyhexadecanoate + NAD(+) = 16-oxohexadecanoate + NADH + H(+). It carries out the reaction hexan-1-ol + NAD(+) = hexanal + NADH + H(+). The catalysed reaction is (E)-hex-2-en-1-ol + NAD(+) = (E)-hex-2-enal + NADH + H(+). It catalyses the reaction (E)-4-hydroxynon-2-en-1-ol + NAD(+) = (E)-4-hydroxynon-2-enal + NADH + H(+). Retinol oxidation is inhibited by the detergent Tween 80. Ethanol inhibits both all-trans-retinol and 9-cis-retinol oxidation. 13-cis-retinol is an effective competitive inhibitor of the 9-cis-retinol oxidation. All-trans-retinoic acid is a powerful inhibitor of all-trans-retinol oxidation. 13-cis-retinoic acid is a powerful inhibitor of all-trans-retinol oxidation. Cimetidine competitively inhibited ethanol oxidation. Its function is as follows. Catalyzes the NAD-dependent oxidation of all-trans-retinol, alcohol, aldehyde and omega-hydroxy fatty acids and their derivatives. Oxidizes preferentially all trans-retinol, all-trans-4-hydroxyretinol, 9-cis-retinol, 2-hexenol, and long chain omega-hydroxy fatty acids such as juniperic acid. In vitro can also catalyze the NADH-dependent reduction of all-trans-retinal and aldehydes and their derivatives. Reduces preferentially all trans-retinal, all-trans-4-oxoretinal and hexanal. Catalyzes in the oxidative direction with higher efficiency. Therefore may participate in retinoid metabolism, fatty acid omega-oxidation, and elimination of cytotoxic aldehydes produced by lipid peroxidation. This chain is All-trans-retinol dehydrogenase [NAD(+)] ADH7 (Adh7), found in Mus musculus (Mouse).